The chain runs to 250 residues: Acyl-coenzyme A diphosphatase fit1 (250 aa).

Over methionine 1–aspartate 23 the chain is Cytoplasmic. The helical transmembrane segment at isoleucine 24–valine 44 threads the bilayer. The Lumenal portion of the chain corresponds to aspartate 45 to asparagine 58. The helical transmembrane segment at leucine 59–histidine 79 threads the bilayer. Residues alanine 80 to arginine 95 lie on the Cytoplasmic side of the membrane. The helical transmembrane segment at tyrosine 96 to isoleucine 116 threads the bilayer. Over aspartate 117–glycine 160 the chain is Lumenal. An N-linked (GlcNAc...) asparagine glycan is attached at asparagine 149. The active site involves histidine 161. The helical transmembrane segment at histidine 161–leucine 181 threads the bilayer. Over asparagine 182–lysine 191 the chain is Cytoplasmic. The helical transmembrane segment at valine 192–histidine 212 threads the bilayer. Residue histidine 212 is part of the active site. Residue threonine 213 is a topological domain, lumenal. Residues threonine 214–phenylalanine 234 traverse the membrane as a helical segment. The Cytoplasmic portion of the chain corresponds to serine 235–tyrosine 250.

This sequence belongs to the FIT family. Fungal FIT2B/SCS3 subfamily.

The protein resides in the endoplasmic reticulum membrane. It catalyses the reaction an acyl-CoA + H2O = an acyl-4'-phosphopantetheine + adenosine 3',5'-bisphosphate + 2 H(+). The catalysed reaction is (9Z)-octadecenoyl-CoA + H2O = S-(9Z-octadecenoyl)-4'-phosphopantetheine + adenosine 3',5'-bisphosphate + 2 H(+). It carries out the reaction (5Z,8Z,11Z,14Z)-eicosatetraenoyl-CoA + H2O = S-(5Z,8Z,11Z,14Z-eicosatetraenoyl)-4'-phosphopantetheine + adenosine 3',5'-bisphosphate + 2 H(+). The enzyme catalyses hexadecanoyl-CoA + H2O = S-hexadecanoyl-4'-phosphopantetheine + adenosine 3',5'-bisphosphate + 2 H(+). Its function is as follows. Fatty acyl-coenzyme A (CoA) diphosphatase that hydrolyzes fatty acyl-CoA to yield acyl-4'-phosphopantetheine and adenosine 3',5'-bisphosphate. Preferentially hydrolyzes unsaturated long-chain acyl-CoA substrates in the endoplasmic reticulum (ER) lumen. This catalytic activity is required for maintaining ER structure and for lipid droplets (LDs) biogenesis, which are lipid storage organelles involved in maintaining lipid and energy homeostasis. May directly bind to diacylglycerol (DAGs) and triacylglycerol, which is also important for LD biogenesis. May support directional budding of nacent LDs from the ER into the cytosol by reducing DAG levels at sites of LD formation. May play a role in the regulation of cell morphology and cytoskeletal organization. This chain is Acyl-coenzyme A diphosphatase fit1, found in Schizosaccharomyces pombe (strain 972 / ATCC 24843) (Fission yeast).